The following is a 177-amino-acid chain: MSRVAKAPVTIPAGVEVTLNGQELSIKGGKGSLVRSIHAGVEVTKEDNVLKFAPRDGIAGADAQAGTARALANNMVIGVTQGFERKLQLVGVGYKASIKGNAVALALGFSHPVEHALPAGVTAECPTATEIVLRGVDKQLVGQVAADIRSYRAPEPYKGKGVRYANEQVRTKEAKKK.

The protein belongs to the universal ribosomal protein uL6 family. Part of the 50S ribosomal subunit.

Functionally, this protein binds to the 23S rRNA, and is important in its secondary structure. It is located near the subunit interface in the base of the L7/L12 stalk, and near the tRNA binding site of the peptidyltransferase center. The polypeptide is Large ribosomal subunit protein uL6 (Aeromonas salmonicida (strain A449)).